Here is a 550-residue protein sequence, read N- to C-terminus: CTP synthase (550 aa).

The tract at residues 1–266 is amidoligase domain; it reads MNVNYIFVTG…DEYICKYFNL (266 aa). Ser14 serves as a coordination point for CTP. Ser14 contributes to the UTP binding site. Residues 15–20 and Asp72 each bind ATP; that span reads SLGKGI. Mg(2+)-binding residues include Asp72 and Glu140. CTP is bound by residues 147 to 149, 187 to 192, and Lys223; these read DIE and KTKPTQ. Residues 187 to 192 and Lys223 contribute to the UTP site; that span reads KTKPTQ. In terms of domain architecture, Glutamine amidotransferase type-1 spans 291–546; that stretch reads TIGIVGKYIR…INAAIQYQCK (256 aa). Position 353 (Gly353) interacts with L-glutamine. Cys380 serves as the catalytic Nucleophile; for glutamine hydrolysis. L-glutamine-binding positions include 381–384, Glu404, and Arg474; that span reads LGMQ. Residues His519 and Glu521 contribute to the active site.

It belongs to the CTP synthase family. Homotetramer.

The catalysed reaction is UTP + L-glutamine + ATP + H2O = CTP + L-glutamate + ADP + phosphate + 2 H(+). It catalyses the reaction L-glutamine + H2O = L-glutamate + NH4(+). The enzyme catalyses UTP + NH4(+) + ATP = CTP + ADP + phosphate + 2 H(+). Its pathway is pyrimidine metabolism; CTP biosynthesis via de novo pathway; CTP from UDP: step 2/2. Its activity is regulated as follows. Allosterically activated by GTP, when glutamine is the substrate; GTP has no effect on the reaction when ammonia is the substrate. The allosteric effector GTP functions by stabilizing the protein conformation that binds the tetrahedral intermediate(s) formed during glutamine hydrolysis. Inhibited by the product CTP, via allosteric rather than competitive inhibition. Functionally, catalyzes the ATP-dependent amination of UTP to CTP with either L-glutamine or ammonia as the source of nitrogen. Regulates intracellular CTP levels through interactions with the four ribonucleotide triphosphates. The chain is CTP synthase from Blochmanniella floridana.